Here is a 152-residue protein sequence, read N- to C-terminus: MSEKYIVTWDMLQIHARKLASRLMPSEQWKGIIAVSRGGLVPGALLARELGIRHVDTVCISSYDHDNQRELKVLKCAEGDGEGFIVIDDLVDTGGTAVAIREMYPKAHFVTIFAKPAGRPLVDDYVVDIPQDTWIEQPWDMGVVFVPPISGR.

5-phospho-alpha-D-ribose 1-diphosphate contacts are provided by residues 37-38, Arg-69, and 88-96; these read RG and DDLVDTGGT. GMP is bound at residue Arg-69. Mg(2+) is bound at residue Asp-89. Guanine is bound by residues Asp-92 and Ile-135. Xanthine contacts are provided by Asp-92 and Ile-135. GMP-binding positions include 92-96 and 134-135; these read DTGGT and WI.

Belongs to the purine/pyrimidine phosphoribosyltransferase family. XGPT subfamily. Homotetramer. It depends on Mg(2+) as a cofactor.

The protein localises to the cell inner membrane. The enzyme catalyses GMP + diphosphate = guanine + 5-phospho-alpha-D-ribose 1-diphosphate. The catalysed reaction is XMP + diphosphate = xanthine + 5-phospho-alpha-D-ribose 1-diphosphate. It carries out the reaction IMP + diphosphate = hypoxanthine + 5-phospho-alpha-D-ribose 1-diphosphate. The protein operates within purine metabolism; GMP biosynthesis via salvage pathway; GMP from guanine: step 1/1. It functions in the pathway purine metabolism; XMP biosynthesis via salvage pathway; XMP from xanthine: step 1/1. Its function is as follows. Purine salvage pathway enzyme that catalyzes the transfer of the ribosyl-5-phosphate group from 5-phospho-alpha-D-ribose 1-diphosphate (PRPP) to the N9 position of the 6-oxopurines guanine and xanthine to form the corresponding ribonucleotides GMP (guanosine 5'-monophosphate) and XMP (xanthosine 5'-monophosphate), with the release of PPi. To a lesser extent, also acts on hypoxanthine. The chain is Xanthine-guanine phosphoribosyltransferase from Shigella boydii serotype 18 (strain CDC 3083-94 / BS512).